The sequence spans 193 residues: dTTP/UTP pyrophosphatase (193 aa).

Asp-75 functions as the Proton acceptor in the catalytic mechanism.

It belongs to the Maf family. YhdE subfamily. The cofactor is a divalent metal cation.

Its subcellular location is the cytoplasm. The catalysed reaction is dTTP + H2O = dTMP + diphosphate + H(+). The enzyme catalyses UTP + H2O = UMP + diphosphate + H(+). Nucleoside triphosphate pyrophosphatase that hydrolyzes dTTP and UTP. May have a dual role in cell division arrest and in preventing the incorporation of modified nucleotides into cellular nucleic acids. This Koribacter versatilis (strain Ellin345) protein is dTTP/UTP pyrophosphatase.